Consider the following 188-residue polypeptide: Phospholipase A2 inhibitor 31 kDa subunit (188 aa).

8 cysteine pairs are disulfide-bonded: C3/C27, C6/C13, C20/C48, C54/C75, C76/C81, C99/C124, C117/C146, and C150/C172. N157 carries an N-linked (GlcNAc...) asparagine glycan.

Belongs to the CNF-like-inhibitor family. As to quaternary structure, heterodimer with phospholipase A2 inhibitor 25 kDa. Post-translationally, N-glycosylated. In terms of tissue distribution, expressed by the liver.

It is found in the secreted. In terms of biological role, inhibits the enzymatic activity of phospholipase A2. This Naja kaouthia (Monocled cobra) protein is Phospholipase A2 inhibitor 31 kDa subunit.